A 439-amino-acid polypeptide reads, in one-letter code: Chitinase-like protein Idgf1 (439 aa).

The N-terminal stretch at 1–20 (MRFQLCYLLGLLSVTSLSHA) is a signal peptide. In terms of domain architecture, GH18 spans 22 to 439 (SNLICYYDST…IVRSIKYFMG (418 aa)). Cysteine 26 and cysteine 53 form a disulfide bridge. Asparagine 122, asparagine 218, and asparagine 346 each carry an N-linked (GlcNAc...) asparagine glycan. Residues cysteine 340 and cysteine 423 are joined by a disulfide bond.

The protein belongs to the glycosyl hydrolase 18 family. IDGF subfamily. Glycosylated.

The protein resides in the secreted. Functionally, cooperates with insulin-like peptides to stimulate the proliferation, polarization and motility of imaginal disk cells. May act by stabilizing the binding of insulin-like peptides to its receptor through a simultaneous interaction with both molecules to form a multiprotein signaling complex. In Drosophila yakuba (Fruit fly), this protein is Chitinase-like protein Idgf1 (Idgf1).